The chain runs to 569 residues: Proline--tRNA ligase (569 aa).

This sequence belongs to the class-II aminoacyl-tRNA synthetase family. ProS type 1 subfamily. As to quaternary structure, homodimer.

Its subcellular location is the cytoplasm. The enzyme catalyses tRNA(Pro) + L-proline + ATP = L-prolyl-tRNA(Pro) + AMP + diphosphate. Functionally, catalyzes the attachment of proline to tRNA(Pro) in a two-step reaction: proline is first activated by ATP to form Pro-AMP and then transferred to the acceptor end of tRNA(Pro). As ProRS can inadvertently accommodate and process non-cognate amino acids such as alanine and cysteine, to avoid such errors it has two additional distinct editing activities against alanine. One activity is designated as 'pretransfer' editing and involves the tRNA(Pro)-independent hydrolysis of activated Ala-AMP. The other activity is designated 'posttransfer' editing and involves deacylation of mischarged Ala-tRNA(Pro). The misacylated Cys-tRNA(Pro) is not edited by ProRS. The sequence is that of Proline--tRNA ligase from Dehalococcoides mccartyi (strain CBDB1).